Reading from the N-terminus, the 800-residue chain is Transducin beta-like protein 3 (800 aa).

N-acetylalanine is present on A2. WD repeat units follow at residues 64 to 105, 107 to 146, 149 to 190, 193 to 232, 245 to 284, 290 to 329, 332 to 372, 374 to 413, 419 to 459, 477 to 516, 519 to 560, 562 to 602, and 604 to 642; these read EDQE…RLWK, IHTA…GTHH, GSPG…CLAV, AHYS…ATRT, LPEE…CVHA, GPGR…LRKQ, GYSE…CQIL, GHTD…EVAC, GHTH…LSKG, CHDK…LLGT, GHRR…KTFE, HDAS…RTLD, and HEDK…EQAE. S257 bears the Phosphoserine mark. A Glycyl lysine isopeptide (Lys-Gly) (interchain with G-Cter in SUMO2) cross-link involves residue K407.

As to quaternary structure, part of the small subunit (SSU) processome, composed of more than 70 proteins and the RNA chaperone small nucleolar RNA (snoRNA) U3.

Its subcellular location is the nucleus. The protein localises to the nucleolus. In terms of biological role, part of the small subunit (SSU) processome, first precursor of the small eukaryotic ribosomal subunit. During the assembly of the SSU processome in the nucleolus, many ribosome biogenesis factors, an RNA chaperone and ribosomal proteins associate with the nascent pre-rRNA and work in concert to generate RNA folding, modifications, rearrangements and cleavage as well as targeted degradation of pre-ribosomal RNA by the RNA exosome. The chain is Transducin beta-like protein 3 (TBL3) from Bos taurus (Bovine).